We begin with the raw amino-acid sequence, 246 residues long: MyoD family inhibitor domain-containing protein (246 aa).

2 disordered regions span residues 1–93 and 134–164; these read MSQE…EEET and KIQSSLSVSSDGSKKSKESSAYSQKPSASPE. The Extracellular segment spans residues 1 to 170; the sequence is MSQEREPFSP…ASPEDGCVHC (170 aa). The span at 63 to 87 shows a compositional bias: polar residues; it reads EDNSNSQPIKAQPQRLPQPNTSALE. In terms of domain architecture, MDFI spans 74-246; the sequence is QPQRLPQPNT…MECCGICFPS (173 aa). The chain crosses the membrane as a helical span at residues 171-188; it reads ILTCLFCEFLTLCNIVVG. The Cytoplasmic portion of the chain corresponds to 189 to 246; the sequence is QASCGICTSEACCCCCTEEMGDDCNCPCDMDCGIMDACCESSDCLEICMECCGICFPS.

It belongs to the MDFI family. In terms of tissue distribution, expressed broadly at a low level in the early embryo.

Its subcellular location is the cytoplasm. The protein localises to the cell membrane. It localises to the secreted. Required to control the activity of various transcription factors through their sequestration in the cytoplasm. Retains nuclear Zic proteins in the cytoplasm and inhibits their transcriptional activation. Required for dorsoanterior development. Necessary for siamois to activate downstream target genes, including gsc, during execution of the dorsal organizer program. Also regulates the transcriptional activity of TCF7L1/TCF3 by interacting directly with TCF7L1/TCF3 and preventing it from binding DNA. Involved in the development of lymphatic vessel valves. It is required to promote lymphatic endothelial cell migration, in a process that involves down-regulation of integrin beta 1 activation and control of cell adhesion to the extracellular matrix. The protein is MyoD family inhibitor domain-containing protein of Xenopus laevis (African clawed frog).